The sequence spans 242 residues: Large ribosomal subunit protein uL1 (242 aa).

Belongs to the universal ribosomal protein uL1 family. In terms of assembly, part of the 50S ribosomal subunit.

Binds directly to 23S rRNA. The L1 stalk is quite mobile in the ribosome, and is involved in E site tRNA release. Its function is as follows. Protein L1 is also a translational repressor protein, it controls the translation of the L11 operon by binding to its mRNA. The protein is Large ribosomal subunit protein uL1 of Sulfurihydrogenibium sp. (strain YO3AOP1).